The following is a 156-amino-acid chain: uncharacterized protein (156 aa).

This is an uncharacterized protein from Escherichia coli (strain K12).